Reading from the N-terminus, the 997-residue chain is Glutamate [NMDA] receptor subunit 1 (997 aa).

The N-terminal stretch at 1–26 (MAVAGFVFCWPLLGLTIVLLVAPIDA) is a signal peptide. Residues 27 to 573 (AQRHTASDNP…TLVSFLQPFS (547 aa)) are Extracellular-facing. 7 N-linked (GlcNAc...) asparagine glycosylation sites follow: asparagine 258, asparagine 314, asparagine 345, asparagine 397, asparagine 454, asparagine 481, and asparagine 501. Glycine-binding positions include 530-532 (PLT) and arginine 537. Residues 574-594 (NTLWILVMVSVHVVALVLYLL) traverse the membrane as a helical segment. Residues 595 to 651 (DRFSPFGRFKLSHSDSNEEKALNLSSAVWFAWGVLLNSGIGEGTPRSFSARVLGMVW) are Cytoplasmic-facing. Residues 652–672 (AGFAMIIVASYTANLAAFLVL) form a helical membrane-spanning segment. Topologically, residues 673–831 (ERPKTKLSGI…KTPNTLGLKN (159 aa)) are extracellular. N-linked (GlcNAc...) asparagine glycosylation is present at asparagine 693. Glycine is bound by residues serine 703 and aspartate 747. A helical membrane pass occupies residues 832–852 (MAGVFILVGVGIAGGVGLIII). The Cytoplasmic segment spans residues 853–997 (EVIYKKHQVK…YTSDVSHLVV (145 aa)). The segment at 970-997 (LGKTRPQQSVLPPRYSPGYTSDVSHLVV) is disordered. Residues 987-997 (GYTSDVSHLVV) are compositionally biased toward polar residues.

Belongs to the glutamate-gated ion channel (TC 1.A.10.1) family. As to quaternary structure, forms a heteromeric NMDA channel with Nmdar2.

The protein localises to the cell membrane. Its subcellular location is the postsynaptic cell membrane. The protein resides in the postsynaptic density. In terms of biological role, NMDA receptor subtype of glutamate-gated ion channels with high calcium permeability and voltage-dependent sensitivity to magnesium. Mediated by glycine. This protein plays a key role in synaptic plasticity, synaptogenesis, excitotoxicity, memory acquisition and learning. It mediates neuronal functions in glutamate neurotransmission. Is involved in the cell surface targeting of NMDA receptors. Plays a role in associative learning and in long-term memory consolidation. This is Glutamate [NMDA] receptor subunit 1 from Drosophila yakuba (Fruit fly).